The sequence spans 496 residues: Probable CtpA-like serine protease (496 aa).

The span at 1 to 16 shows a compositional bias: basic and acidic residues; that stretch reads MDDKQHTSSSDDERAE. Residues 1–27 are disordered; that stretch reads MDDKQHTSSSDDERAEIATSNQDQETN. Over residues 18–27 the composition is skewed to polar residues; it reads ATSNQDQETN. A helical membrane pass occupies residues 39–59; it reads FISILIGTILITAVITVVAYI. The PDZ domain maps to 124-206; the sequence is TKSFNEGVSG…TEVTLTVQRG (83 aa). Catalysis depends on charge relay system residues Ser-329, Asp-340, and Lys-354.

This sequence belongs to the peptidase S41A family.

It is found in the cell membrane. In Staphylococcus aureus (strain COL), this protein is Probable CtpA-like serine protease.